Reading from the N-terminus, the 439-residue chain is Glutamine synthetase (439 aa).

Positions 12–93 (SKIKFVQLVF…VYGFIYKDNK (82 aa)) constitute a GS beta-grasp domain. Positions 99-439 (PRGILKRALE…EWELERYFFL (341 aa)) constitute a GS catalytic domain. Mg(2+) contacts are provided by Glu-122 and Glu-124. Glu-172 provides a ligand contact to ATP. Positions 177 and 184 each coordinate Mg(2+). Gly-229 is an L-glutamate binding site. His-233 serves as a coordination point for Mg(2+). ATP contacts are provided by residues 235–237 (HIS) and Ser-237. Residues Arg-283, Glu-289, and Arg-301 each contribute to the L-glutamate site. ATP is bound by residues Arg-301, Arg-306, and Lys-313. Glu-318 serves as a coordination point for Mg(2+). Arg-320 is a binding site for L-glutamate.

Belongs to the glutamine synthetase family. As to quaternary structure, oligomer of 12 subunits arranged in the form of two hexagons. Mg(2+) serves as cofactor.

It is found in the cytoplasm. The catalysed reaction is L-glutamate + NH4(+) + ATP = L-glutamine + ADP + phosphate + H(+). In terms of biological role, probably involved in nitrogen metabolism via ammonium assimilation. Catalyzes the ATP-dependent biosynthesis of glutamine from glutamate and ammonia. The protein is Glutamine synthetase of Pyrococcus furiosus (strain ATCC 43587 / DSM 3638 / JCM 8422 / Vc1).